We begin with the raw amino-acid sequence, 117 residues long: Cliotide T9 (117 aa).

Positions 1–25 are cleaved as a signal peptide; the sequence is MAYVRLACLAVIFFFAASVMFTVEA. Residues 26-55 constitute a cross-link (cyclopeptide (Gly-Asn)); it reads GIPCGESCVFIPCLTTVVGCSCKNKVCYNN. Cystine bridges form between C29-C45, C33-C47, and C38-C52. Residues 56–117 constitute a propeptide, removed in mature form; sequence HVIAAEANSI…YLLKDFLKMP (62 aa).

Contains 3 disulfide bonds. In terms of processing, this is a cyclic peptide. Expressed in seed but not in root, nodule, flower, stem, shoot, leaf and pod (at protein level).

Its function is as follows. Probably participates in a plant defense mechanism. The sequence is that of Cliotide T9 from Clitoria ternatea (Butterfly pea).